The following is a 99-amino-acid chain: MANMFLMFYLSMIMFLFGCMVFVSNRKHLLSTLLSLEYMVLSLFIFLFFYLNFMNYETYFSMFFLTFCVCEGVLGLSILVSMIRTHGNDYFQSFSILQC.

Helical transmembrane passes span 4-24 (MFLMFYLSMIMFLFGCMVFVS), 29-49 (LLSTLLSLEYMVLSLFIFLFF), and 63-83 (FFLTFCVCEGVLGLSILVSMI).

This sequence belongs to the complex I subunit 4L family.

The protein localises to the mitochondrion membrane. The catalysed reaction is a ubiquinone + NADH + 5 H(+)(in) = a ubiquinol + NAD(+) + 4 H(+)(out). In terms of biological role, core subunit of the mitochondrial membrane respiratory chain NADH dehydrogenase (Complex I) that is believed to belong to the minimal assembly required for catalysis. Complex I functions in the transfer of electrons from NADH to the respiratory chain. The immediate electron acceptor for the enzyme is believed to be ubiquinone. The chain is NADH-ubiquinone oxidoreductase chain 4L (mt:ND4L) from Anopheles gambiae (African malaria mosquito).